The sequence spans 92 residues: Small ribosomal subunit protein uS19 (92 aa).

The protein belongs to the universal ribosomal protein uS19 family.

Its function is as follows. Protein S19 forms a complex with S13 that binds strongly to the 16S ribosomal RNA. The sequence is that of Small ribosomal subunit protein uS19 from Parvibaculum lavamentivorans (strain DS-1 / DSM 13023 / NCIMB 13966).